Consider the following 646-residue polypeptide: Translation initiation factor IF-2 (646 aa).

The region spanning 146–315 (PRPPVVTVMG…LLVAEMEELR (170 aa)) is the tr-type G domain. The tract at residues 155 to 162 (GHVDHGKT) is G1. A GTP-binding site is contributed by 155–162 (GHVDHGKT). A G2 region spans residues 180 to 184 (GITQH). The G3 stretch occupies residues 201-204 (DTPG). GTP is bound by residues 201 to 205 (DTPGH) and 255 to 258 (NKID). The interval 255–258 (NKID) is G4. Positions 291–293 (SAK) are G5.

The protein belongs to the TRAFAC class translation factor GTPase superfamily. Classic translation factor GTPase family. IF-2 subfamily.

It localises to the cytoplasm. Functionally, one of the essential components for the initiation of protein synthesis. Protects formylmethionyl-tRNA from spontaneous hydrolysis and promotes its binding to the 30S ribosomal subunits. Also involved in the hydrolysis of GTP during the formation of the 70S ribosomal complex. This chain is Translation initiation factor IF-2, found in Clostridioides difficile (strain 630) (Peptoclostridium difficile).